A 679-amino-acid polypeptide reads, in one-letter code: Mitotic interactor and substrate of PLK1 (679 aa).

Phosphoserine; by CDK1; in vitro is present on Ser-78. Disordered stretches follow at residues 151 to 182 (AVRKSSTVATLQGTPDHGDPRTPGPPRSTPLE) and 206 to 245 (ANKGAPHSSPARGTPAGTTPGASQAPKAFNKPHLANGHVV). A compositionally biased stretch (polar residues) spans 153–163 (RKSSTVATLQG). Phosphoserine is present on Ser-156. A phosphothreonine; by CDK1; in vitro mark is found at Thr-164 and Thr-172. Thr-179 is modified (phosphothreonine). A Phosphoserine; by CDK1; in vitro modification is found at Ser-214. Thr-219 is subject to Phosphothreonine. A Phosphothreonine; by CDK1; in vitro modification is found at Thr-224. A Phosphoserine; by CDK1; in vitro modification is found at Ser-284. Position 287 is a phosphothreonine; by CDK1; in vitro (Thr-287). The residue at position 348 (Ser-348) is a Phosphoserine. Over residues 360–371 (QREEDHRREGLH) the composition is skewed to basic and acidic residues. Residues 360-419 (QREEDHRREGLHVGRASTPDWVSEGPQPGLRRALSSDSILSPAPDARAADPAPEVRKVNR) are disordered. Position 377 is a phosphothreonine; by CDK1; in vitro (Thr-377). At Ser-382 the chain carries Phosphoserine; by CDK1; in vitro. Ser-394, Ser-395, and Ser-397 each carry phosphoserine; by PLK1; in vitro. Ser-400 is subject to Phosphoserine. The segment covering 401-411 (PAPDARAADPA) has biased composition (low complexity). Ser-430 carries the post-translational modification Phosphoserine. The interval 447 to 494 (PSSLSTAEAKAATSPKATMSPRHLSESSGKPLSTKQEASKPPRGCPQA) is disordered. Position 471 is a phosphoserine; by PLK1; in vitro (Ser-471). A compositionally biased stretch (polar residues) spans 472–482 (ESSGKPLSTKQ). Phosphoserine occurs at positions 541 and 543. A coiled-coil region spans residues 545 to 569 (DLLERERESVLRREQEVAEERRNAL). A compositionally biased stretch (basic and acidic residues) spans 557–567 (REQEVAEERRN). 2 disordered regions span residues 557–598 (REQE…ITGS) and 622–643 (DPVDSAPPGQRKKEQWYAGINP). Ser-575 bears the Phosphoserine; by CDK1; in vitro mark. Thr-577 is modified (phosphothreonine). Phosphoserine; by PLK1; in vitro is present on residues Ser-582 and Ser-586. Residues 583–593 (DQNSRSSSQAS) show a composition bias toward low complexity. Ser-675 carries the post-translational modification Phosphoserine.

The protein belongs to the MISP family. As to quaternary structure, associates with F-actin. Interacts with DCTN1; this interaction regulates DCTN1 distribution at the cell cortex. Interacts with PTK2/FAK and MAPRE1. In terms of processing, phosphorylated by CDK1 and PLK1. CDK1 is the priming kinase for PLK1 phosphorylation. Phosphorylation by PLK1 is required for proper spindle orientation at metaphase.

The protein resides in the cell junction. It is found in the focal adhesion. The protein localises to the cytoplasm. Its subcellular location is the cytoskeleton. It localises to the cell cortex. In terms of biological role, plays a role in mitotic spindle orientation and mitotic progression. Regulates the distribution of dynactin at the cell cortex in a PLK1-dependent manner, thus stabilizing cortical and astral microtubule attachments required for proper mitotic spindle positioning. May link microtubules to the actin cytospkeleton and focal adhesions. May be required for directed cell migration and centrosome orientation. May also be necessary for proper stacking of the Golgi apparatus. The chain is Mitotic interactor and substrate of PLK1 from Homo sapiens (Human).